The chain runs to 437 residues: GTPase Der (437 aa).

2 EngA-type G domains span residues 4–167 (PIVA…PDNA) and 175–352 (IHFS…QHHR). GTP contacts are provided by residues 10 to 17 (GRPNVGKS), 57 to 61 (DTGGI), 119 to 122 (NKVD), 181 to 188 (GRPNVGKS), 229 to 233 (DTAGI), and 294 to 297 (NKWD). Residues 353-437 (QRIQSAVLND…PIHLIKRQRQ (85 aa)) form the KH-like domain.

Belongs to the TRAFAC class TrmE-Era-EngA-EngB-Septin-like GTPase superfamily. EngA (Der) GTPase family. In terms of assembly, associates with the 50S ribosomal subunit.

GTPase that plays an essential role in the late steps of ribosome biogenesis. The polypeptide is GTPase Der (Limosilactobacillus reuteri (strain DSM 20016) (Lactobacillus reuteri)).